A 105-amino-acid polypeptide reads, in one-letter code: Small ribosomal subunit protein uS10 (105 aa).

The protein belongs to the universal ribosomal protein uS10 family. As to quaternary structure, part of the 30S ribosomal subunit.

In terms of biological role, involved in the binding of tRNA to the ribosomes. In Desulfotalea psychrophila (strain LSv54 / DSM 12343), this protein is Small ribosomal subunit protein uS10.